The chain runs to 128 residues: Sulfurtransferase TusD (128 aa).

Catalysis depends on Cys78, which acts as the Cysteine persulfide intermediate.

This sequence belongs to the DsrE/TusD family. In terms of assembly, heterohexamer, formed by a dimer of trimers. The hexameric TusBCD complex contains 2 copies each of TusB, TusC and TusD. The TusBCD complex interacts with TusE.

It is found in the cytoplasm. Functionally, part of a sulfur-relay system required for 2-thiolation of 5-methylaminomethyl-2-thiouridine (mnm(5)s(2)U) at tRNA wobble positions. Accepts sulfur from TusA and transfers it in turn to TusE. The chain is Sulfurtransferase TusD from Escherichia coli O127:H6 (strain E2348/69 / EPEC).